Here is a 418-residue protein sequence, read N- to C-terminus: Putative ion-transport protein YfeO (418 aa).

12 helical membrane-spanning segments follow: residues 10-30 (LLLS…LIVV), 54-74 (DSPL…GLVI), 99-119 (ALPG…SLGP), 120-140 (EHPI…RLLP), 149-169 (ILAS…AALI), 186-206 (LFAP…FFHP), 223-243 (ILSG…AVWC), 258-278 (VLVL…GGPV), 300-320 (DYFL…ASGF), 322-342 (GGRI…LHEH), 343-363 (VPAV…VLVV), and 371-391 (LFMA…CIVM).

The protein belongs to the chloride channel (TC 2.A.49) family.

The protein localises to the cell membrane. This chain is Putative ion-transport protein YfeO, found in Escherichia coli O139:H28 (strain E24377A / ETEC).